The sequence spans 551 residues: Glucans biosynthesis protein D (551 aa).

Positions 1 to 32 (MDRRRFIKGSMAMAAVCGTSGIASLFSQAAFA) form a signal peptide, tat-type signal.

It belongs to the OpgD/OpgG family. In terms of processing, predicted to be exported by the Tat system. The position of the signal peptide cleavage has not been experimentally proven.

It localises to the periplasm. It functions in the pathway glycan metabolism; osmoregulated periplasmic glucan (OPG) biosynthesis. In terms of biological role, probably involved in the control of the structural glucose backbone of osmoregulated periplasmic glucans (OPGs). The chain is Glucans biosynthesis protein D from Escherichia coli O127:H6 (strain E2348/69 / EPEC).